The chain runs to 511 residues: Light-independent protochlorophyllide reductase subunit B (511 aa).

Residue aspartate 36 coordinates [4Fe-4S] cluster. Aspartate 299 acts as the Proton donor in catalysis. Substrate is bound at residue 434–435 (GM).

It belongs to the ChlB/BchB/BchZ family. In terms of assembly, protochlorophyllide reductase is composed of three subunits; ChlL, ChlN and ChlB. Forms a heterotetramer of two ChlB and two ChlN subunits. It depends on [4Fe-4S] cluster as a cofactor.

The protein localises to the plastid. The protein resides in the chloroplast. The enzyme catalyses chlorophyllide a + oxidized 2[4Fe-4S]-[ferredoxin] + 2 ADP + 2 phosphate = protochlorophyllide a + reduced 2[4Fe-4S]-[ferredoxin] + 2 ATP + 2 H2O. It functions in the pathway porphyrin-containing compound metabolism; chlorophyll biosynthesis (light-independent). Its function is as follows. Component of the dark-operative protochlorophyllide reductase (DPOR) that uses Mg-ATP and reduced ferredoxin to reduce ring D of protochlorophyllide (Pchlide) to form chlorophyllide a (Chlide). This reaction is light-independent. The NB-protein (ChlN-ChlB) is the catalytic component of the complex. The chain is Light-independent protochlorophyllide reductase subunit B from Huperzia lucidula (Shining clubmoss).